A 649-amino-acid polypeptide reads, in one-letter code: Threonine--tRNA ligase (649 aa).

The 61-residue stretch at Met-1–Thr-61 folds into the TGS domain. Residues Asp-242 to Pro-540 form a catalytic region. Positions 336, 387, and 517 each coordinate Zn(2+).

This sequence belongs to the class-II aminoacyl-tRNA synthetase family. Homodimer. Requires Zn(2+) as cofactor.

Its subcellular location is the cytoplasm. The enzyme catalyses tRNA(Thr) + L-threonine + ATP = L-threonyl-tRNA(Thr) + AMP + diphosphate + H(+). In terms of biological role, catalyzes the attachment of threonine to tRNA(Thr) in a two-step reaction: L-threonine is first activated by ATP to form Thr-AMP and then transferred to the acceptor end of tRNA(Thr). Also edits incorrectly charged L-seryl-tRNA(Thr). In Streptococcus mutans serotype c (strain ATCC 700610 / UA159), this protein is Threonine--tRNA ligase.